Consider the following 528-residue polypeptide: Esterase PE16 (528 aa).

Residues 1 to 93 (MSFVFAVPEM…AGWYVDAEAA (93 aa)) enclose the PE domain. The linker stretch occupies residues 94–143 (NAALVDTAATGASELGSGGRTALILGSTGTPRPPFDYMQQVYDRYIAPHY). A PE-PPE domain is found at 149–369 (SGLYTPAQFQ…LRAIIELGYD (221 aa)). Residue S199 is part of the active site. Residues 503–523 (IALLVFAAGIPAVAAVAILTG) form a helical membrane-spanning segment.

It belongs to the mycobacterial PE family.

It localises to the membrane. It carries out the reaction a hexanoate ester + H2O = an aliphatic alcohol + hexanoate + H(+). It catalyses the reaction an octanoate ester + H2O = an aliphatic alcohol + octanoate + H(+). The catalysed reaction is a butanoate ester + H2O = an aliphatic alcohol + butanoate + H(+). With respect to regulation, esterase activity is significantly inhibited by the serine modifier phenylmethylsulfonyl fluoride (PMSF). Esterase that hydrolyzes short to medium chain fatty acid esters with the highest specific activity for p-nitrophenyl caproate (pNPC6). Has lower activity with p-nitrophenyl caprylate (pNPC8) and p-nitrophenyl butyrate (pNPC4). Has weak activity with p-nitrophenyl caprate (pNPC10) and p-nitrophenyl laurate (pNPC12). Does not possess lipolytic activity and cutinase activity. The chain is Esterase PE16 from Mycobacterium tuberculosis (strain ATCC 25618 / H37Rv).